Here is a 297-residue protein sequence, read N- to C-terminus: Glycerol-3-phosphate dehydrogenase [NAD(P)+] (297 aa).

The NADPH site is built by Trp-11, Arg-33, and Lys-79. Sn-glycerol 3-phosphate is bound by residues Lys-79, Gly-107, and Ser-109. Ala-111 contacts NADPH. 5 residues coordinate sn-glycerol 3-phosphate: Lys-161, Asp-214, Ser-224, Arg-225, and Asn-226. Lys-161 functions as the Proton acceptor in the catalytic mechanism. Residue Arg-225 coordinates NADPH. Residues Val-249 and Glu-251 each coordinate NADPH.

The protein belongs to the NAD-dependent glycerol-3-phosphate dehydrogenase family.

It is found in the cytoplasm. The catalysed reaction is sn-glycerol 3-phosphate + NAD(+) = dihydroxyacetone phosphate + NADH + H(+). The enzyme catalyses sn-glycerol 3-phosphate + NADP(+) = dihydroxyacetone phosphate + NADPH + H(+). It functions in the pathway membrane lipid metabolism; glycerophospholipid metabolism. Its function is as follows. Catalyzes the reduction of the glycolytic intermediate dihydroxyacetone phosphate (DHAP) to sn-glycerol 3-phosphate (G3P), the key precursor for phospholipid synthesis. The chain is Glycerol-3-phosphate dehydrogenase [NAD(P)+] from Campylobacter jejuni subsp. jejuni serotype O:2 (strain ATCC 700819 / NCTC 11168).